A 34-amino-acid polypeptide reads, in one-letter code: Somatostatin (34 aa).

The segment at 1–20 (AVERPRQDGQVHEPPGRERK) is disordered. A disulfide bridge connects residues Cys-23 and Cys-34.

The protein belongs to the somatostatin family.

It localises to the secreted. In terms of biological role, somatostatin inhibits the release of somatotropin. The chain is Somatostatin (sst) from Myxine glutinosa (Atlantic hagfish).